The chain runs to 170 residues: Translationally-controlled tumor protein homolog (170 aa).

A TCTP domain is found at 1–170 (MIIYKDLLSG…FKDGLEIEKC (170 aa)).

It belongs to the TCTP family.

The protein localises to the cytoplasm. Its function is as follows. Involved in calcium binding and microtubule stabilization. The chain is Translationally-controlled tumor protein homolog (tpt1) from Scophthalmus maximus (Turbot).